Reading from the N-terminus, the 267-residue chain is 27 kDa core protein (267 aa).

Belongs to the chordopoxvirinae D3 family.

It localises to the virion. In terms of biological role, late protein which is part of a large complex required for early virion morphogenesis. This complex participates in the formation of virosomes and the incorporation of virosomal contents into nascent immature virions. This Canarypox virus (CNPV) protein is 27 kDa core protein.